The following is a 215-amino-acid chain: UPF0323 lipoprotein HP_0232 (215 aa).

The N-terminal stretch at 1–27 (MKKPYRKISDYAIVGGLSALVMVSIVG) is a signal peptide. Cys-28 carries N-palmitoyl cysteine lipidation. Residue Cys-28 is the site of S-diacylglycerol cysteine attachment. Residues 158–169 (QRTYKSPQAYQR) show a composition bias toward polar residues. Residues 158 to 215 (QRTYKSPQAYQRSQNSFSKSAPSASSMGGASKGQSGFFGSSRPTSSPAVSSGTRGFNS) are disordered. Positions 170–208 (SQNSFSKSAPSASSMGGASKGQSGFFGSSRPTSSPAVSS) are enriched in low complexity.

It belongs to the UPF0323 family.

Its subcellular location is the cell membrane. This Helicobacter pylori (strain ATCC 700392 / 26695) (Campylobacter pylori) protein is UPF0323 lipoprotein HP_0232.